The sequence spans 317 residues: MAKDSQKNLNVSNNNNVQCTMGRSSQNINKSDSKGKIKRCTYAYKILLCTIFIWICQCFYNKSYYVYKKDGRRNKGKKILGIRINKSLAEMDHTKYHPEYYDEVQENYDPYYGVNQYSDECESYKSEDDDSEEEYYNSTPRVTVLEPQTENSEDEENYEKTIVDELNELPNDKKALILSYIRNGNDNNMQLLPYANNNKQNTQENISRNKEFFRHFVDFIKGYKLFDSPVLNALLPFIFIAFVYCTITMLVGNVRYIIALYILAKILKMHYDYKHKENNNNNNNNNNNNNNNNNNNNNNNNNNNNNNNNNNKKSKKN.

Residues Met-1–Asp-32 form a disordered region. Positions Asn-8–Val-17 are enriched in low complexity. Polar residues predominate over residues Gln-18–Lys-30. The short motif at Lys-86 to Glu-90 is the PEXEL motif element. The helical transmembrane segment at Val-230–Leu-250 threads the bilayer. The essential for its function stretch occupies residues Lys-265–Asn-317. The tract at residues Glu-277 to Asn-317 is disordered. Low complexity predominate over residues Asn-279–Asn-311.

As to quaternary structure, may interact with MESA. May interact with J-dot compartment protein PF3D7_0801000.

It localises to the host cytoplasm. It is found in the vesicle. Its subcellular location is the membrane. In terms of biological role, during the asexual blood stage, plays an essential role in the recruitment and/or formation of EMP1-containing vesicles at the Maurer's clefts and their subsequent transfer to the host erythrocyte cell membrane. This is EMP1 trafficking protein-7 from Plasmodium falciparum (isolate 3D7).